We begin with the raw amino-acid sequence, 275 residues long: NH(3)-dependent NAD(+) synthetase (275 aa).

46–53 (GISGGQDS) serves as a coordination point for ATP. Mg(2+) is bound at residue D52. Residue R140 coordinates deamido-NAD(+). T160 is a binding site for ATP. E165 contributes to the Mg(2+) binding site. Deamido-NAD(+)-binding residues include K173 and D180. ATP contacts are provided by K189 and T211. Deamido-NAD(+) is bound at residue 260-261 (HK).

Belongs to the NAD synthetase family. In terms of assembly, homodimer.

It catalyses the reaction deamido-NAD(+) + NH4(+) + ATP = AMP + diphosphate + NAD(+) + H(+). Its pathway is cofactor biosynthesis; NAD(+) biosynthesis; NAD(+) from deamido-NAD(+) (ammonia route): step 1/1. In terms of biological role, catalyzes the ATP-dependent amidation of deamido-NAD to form NAD. Uses ammonia as a nitrogen source. The sequence is that of NH(3)-dependent NAD(+) synthetase from Escherichia coli O127:H6 (strain E2348/69 / EPEC).